The following is a 355-amino-acid chain: Neutral protease 2 homolog AFUB_100460 (355 aa).

The N-terminal stretch at 1–19 is a signal peptide; that stretch reads MKITALASAILAVAQGALA. Residues 20–172 constitute a propeptide that is removed on maturation; it reads LPARAPALDI…PASIKPLDRR (153 aa). Cystine bridges form between Cys179–Cys251 and Cys258–Cys276. Residue His300 coordinates Zn(2+). Glu301 is an active-site residue. Residues His304 and Asp315 each coordinate Zn(2+).

This sequence belongs to the peptidase M35 family. Zn(2+) is required as a cofactor.

The protein localises to the secreted. It carries out the reaction Preferential cleavage of bonds with hydrophobic residues in P1'. Also 3-Asn-|-Gln-4 and 8-Gly-|-Ser-9 bonds in insulin B chain.. Functionally, secreted metalloproteinase that allows assimilation of proteinaceous substrates. Shows high activities on basic nuclear substrates such as histone and protamine. May be involved in virulence. The chain is Neutral protease 2 homolog AFUB_100460 from Aspergillus fumigatus (strain CBS 144.89 / FGSC A1163 / CEA10) (Neosartorya fumigata).